We begin with the raw amino-acid sequence, 1013 residues long: Putative helicase mov-10-B.1 (1013 aa).

2 stretches are compositionally biased toward polar residues: residues glutamine 91–alanine 103 and arginine 113–serine 123. A disordered region spans residues glutamine 91–glutamate 129. Glycine 550 to threonine 557 contributes to the ATP binding site. The short motif at aspartate 672 to glycine 675 is the DEAG box element.

Belongs to the DNA2/NAM7 helicase family. SDE3 subfamily.

Its subcellular location is the cytoplasm. It is found in the P-body. The catalysed reaction is ATP + H2O = ADP + phosphate + H(+). Functionally, probable RNA helicase. Required for RNA-mediated gene silencing by the RNA-induced silencing complex (RISC). Required for both miRNA-mediated translational repression and miRNA-mediated cleavage of complementary mRNAs by RISC. The chain is Putative helicase mov-10-B.1 (mov10b.1) from Danio rerio (Zebrafish).